Reading from the N-terminus, the 151-residue chain is NADPH-dependent 7-cyano-7-deazaguanine reductase (151 aa).

Cys49 functions as the Thioimide intermediate in the catalytic mechanism. The Proton donor role is filled by Asp56. Substrate-binding positions include 71 to 73 (IES) and 90 to 91 (HE).

This sequence belongs to the GTP cyclohydrolase I family. QueF type 1 subfamily.

Its subcellular location is the cytoplasm. The enzyme catalyses 7-aminomethyl-7-carbaguanine + 2 NADP(+) = 7-cyano-7-deazaguanine + 2 NADPH + 3 H(+). The protein operates within tRNA modification; tRNA-queuosine biosynthesis. Its function is as follows. Catalyzes the NADPH-dependent reduction of 7-cyano-7-deazaguanine (preQ0) to 7-aminomethyl-7-deazaguanine (preQ1). In Caulobacter vibrioides (strain ATCC 19089 / CIP 103742 / CB 15) (Caulobacter crescentus), this protein is NADPH-dependent 7-cyano-7-deazaguanine reductase.